Consider the following 304-residue polypeptide: Zinc carboxypeptidase (304 aa).

The Peptidase M14 domain maps to 1 to 294; the sequence is QYHTLPEIYS…DSVVTILKES (294 aa). Zn(2+) is bound by residues H58 and E61. C125 and C148 are disulfide-bonded. H184 contributes to the Zn(2+) binding site. E259 functions as the Proton donor/acceptor in the catalytic mechanism.

Belongs to the peptidase M14 family. Zn(2+) is required as a cofactor. Gut specific.

It is found in the secreted. In terms of biological role, involved in the digestion of the blood meal. In Simulium vittatum (Striped black fly), this protein is Zinc carboxypeptidase.